Here is a 115-residue protein sequence, read N- to C-terminus: Large ribosomal subunit protein uL24 (115 aa).

It belongs to the universal ribosomal protein uL24 family. In terms of assembly, part of the 50S ribosomal subunit.

One of two assembly initiator proteins, it binds directly to the 5'-end of the 23S rRNA, where it nucleates assembly of the 50S subunit. Functionally, one of the proteins that surrounds the polypeptide exit tunnel on the outside of the subunit. This is Large ribosomal subunit protein uL24 from Amoebophilus asiaticus (strain 5a2).